The following is a 142-amino-acid chain: Hemoglobin subunit alpha-3 (142 aa).

In terms of domain architecture, Globin spans 2–142 (VLSAADKSNV…VSTVLTSKYR (141 aa)). Residue histidine 59 coordinates O2. Histidine 88 serves as a coordination point for heme b.

The protein belongs to the globin family. In terms of assembly, heterotetramer of two alpha chains and two beta chains. Red blood cells.

Involved in oxygen transport from the lung to the various peripheral tissues. In Bubalus bubalis (Domestic water buffalo), this protein is Hemoglobin subunit alpha-3.